A 110-amino-acid chain; its full sequence is Large ribosomal subunit protein bL20 (110 aa).

The protein belongs to the bacterial ribosomal protein bL20 family.

Binds directly to 23S ribosomal RNA and is necessary for the in vitro assembly process of the 50S ribosomal subunit. It is not involved in the protein synthesizing functions of that subunit. This chain is Large ribosomal subunit protein bL20, found in Shigella boydii serotype 4 (strain Sb227).